A 154-amino-acid polypeptide reads, in one-letter code: MFSQHNGAAVHGLRLQSLLIAAMLTAAMAMVTPTGSGHQLLPPGNHKLCGPALSDAMDVVCPHGFNTLPRKRESLLGNSDDDEDTEQEVQDDSSMWQTLDGAGYSFSPLLTNLYGSEVLIKMRRHRRHLTGGVYDECCVKTCSYLELAIYCLPK.

A signal peptide spans M1–A29. Disulfide bonds link C49–C138, C61–C151, and C137–C142. The segment at R72–D92 is disordered. A propeptide spans E73–M122 (connecting peptide). The span at S79–D91 shows a compositional bias: acidic residues.

The protein belongs to the insulin family. Heterodimer of a B chain and an A chain linked by two disulfide bonds.

It is found in the secreted. Possible ligand of InR/insulin-like receptor. The protein is Insulin-like peptide 1 of Drosophila melanogaster (Fruit fly).